The chain runs to 34 residues: MEVNILALIAVALFISIPTAFLVIIYVKTISENN.

The chain crosses the membrane as a helical span at residues 5–25; sequence ILALIAVALFISIPTAFLVII.

The protein belongs to the PsbM family. PSII is composed of 1 copy each of membrane proteins PsbA, PsbB, PsbC, PsbD, PsbE, PsbF, PsbH, PsbI, PsbJ, PsbK, PsbL, PsbM, PsbT, PsbX, PsbY, PsbZ, Psb30/Ycf12, at least 3 peripheral proteins of the oxygen-evolving complex and a large number of cofactors. It forms dimeric complexes.

The protein localises to the plastid. It is found in the chloroplast thylakoid membrane. In terms of biological role, one of the components of the core complex of photosystem II (PSII). PSII is a light-driven water:plastoquinone oxidoreductase that uses light energy to abstract electrons from H(2)O, generating O(2) and a proton gradient subsequently used for ATP formation. It consists of a core antenna complex that captures photons, and an electron transfer chain that converts photonic excitation into a charge separation. This subunit is found at the monomer-monomer interface. The protein is Photosystem II reaction center protein M of Welwitschia mirabilis (Tree tumbo).